Here is a 761-residue protein sequence, read N- to C-terminus: Mitochondrial intermediate peptidase 1 (761 aa).

A Zn(2+)-binding site is contributed by H530. E531 is an active-site residue. Zn(2+) is bound by residues H534 and H537.

This sequence belongs to the peptidase M3 family. Zn(2+) serves as cofactor.

It is found in the mitochondrion matrix. The enzyme catalyses Release of an N-terminal octapeptide as second stage of processing of some proteins imported into the mitochondrion.. In terms of biological role, cleaves proteins, imported into the mitochondrion, to their mature size. While most mitochondrial precursor proteins are processed to the mature form in one step by mitochondrial processing peptidase (MPP), the sequential cleavage by MIP of an octapeptide after initial processing by MPP is a required step for a subgroup of nuclear-encoded precursor proteins destined for the matrix or the inner membrane. In Cryptococcus neoformans var. neoformans serotype D (strain B-3501A) (Filobasidiella neoformans), this protein is Mitochondrial intermediate peptidase 1 (OCT1).